Reading from the N-terminus, the 54-residue chain is MELSFIHGKNCLPLYCILLELLKNYFKLGPVDFSLSLRKILATLNPQEIPKLFI.

This is an uncharacterized protein from Haemophilus influenzae (strain ATCC 51907 / DSM 11121 / KW20 / Rd).